We begin with the raw amino-acid sequence, 118 residues long: Small ribosomal subunit protein uS13 (118 aa).

A disordered region spans residues 94 to 118 (GLPVRGQRTKTNARTRKGPRKPIKK).

Belongs to the universal ribosomal protein uS13 family. Part of the 30S ribosomal subunit. Forms a loose heterodimer with protein S19. Forms two bridges to the 50S subunit in the 70S ribosome.

Functionally, located at the top of the head of the 30S subunit, it contacts several helices of the 16S rRNA. In the 70S ribosome it contacts the 23S rRNA (bridge B1a) and protein L5 of the 50S subunit (bridge B1b), connecting the 2 subunits; these bridges are implicated in subunit movement. Contacts the tRNAs in the A and P-sites. The sequence is that of Small ribosomal subunit protein uS13 from Mannheimia succiniciproducens (strain KCTC 0769BP / MBEL55E).